We begin with the raw amino-acid sequence, 510 residues long: 2,3-bisphosphoglycerate-independent phosphoglycerate mutase (510 aa).

Mn(2+) contacts are provided by D13 and S63. S63 acts as the Phosphoserine intermediate in catalysis. Substrate-binding positions include H124, 154–155 (RD), R186, R192, 262–265 (RADR), and K334. Mn(2+)-binding residues include D401, H405, D442, H443, and H461.

The protein belongs to the BPG-independent phosphoglycerate mutase family. Monomer. Requires Mn(2+) as cofactor.

It catalyses the reaction (2R)-2-phosphoglycerate = (2R)-3-phosphoglycerate. The protein operates within carbohydrate degradation; glycolysis; pyruvate from D-glyceraldehyde 3-phosphate: step 3/5. Catalyzes the interconversion of 2-phosphoglycerate and 3-phosphoglycerate. The protein is 2,3-bisphosphoglycerate-independent phosphoglycerate mutase of Vibrio parahaemolyticus serotype O3:K6 (strain RIMD 2210633).